Consider the following 299-residue polypeptide: Lathosterol oxidase (299 aa).

3 helical membrane-spanning segments follow: residues 32–52, 79–99, and 117–137; these read ISLLIVTNVGAYILYFFCATL, FTVQALPWISILTVALFLLEI, and FELVVSIISFLFFTDMFIYWI. One can recognise a Fatty acid hydroxylase domain in the interval 124–252; that stretch reads ISFLFFTDMF…YFTLWDRIGG (129 aa). The short motif at 138–143 is the Histidine box-1 element; it reads HRGLHH. A Histidine box-2 motif is present at residues 151–155; sequence HKPHH. A helical transmembrane segment spans residues 186–206; that stretch reads IFPLHKVVYLSLYILVNIWTI. The Histidine box-3 signature appears at 228 to 233; sequence HHTDHH. Residue S253 is modified to Phosphoserine. Residues 274-299 form a disordered region; the sequence is EGKRSSHSGNGCKNEKLFNGEFTKTE. The segment covering 286 to 299 has biased composition (basic and acidic residues); it reads KNEKLFNGEFTKTE.

Belongs to the sterol desaturase family. The cofactor is Fe cation.

It localises to the endoplasmic reticulum membrane. The enzyme catalyses a Delta(7)-sterol + 2 Fe(II)-[cytochrome b5] + O2 + 2 H(+) = a Delta(5),Delta(7)-sterol + 2 Fe(III)-[cytochrome b5] + 2 H2O. It catalyses the reaction lathosterol + 2 Fe(II)-[cytochrome b5] + O2 + 2 H(+) = 7-dehydrocholesterol + 2 Fe(III)-[cytochrome b5] + 2 H2O. It carries out the reaction 5alpha-cholesta-7,24-dien-3beta-ol + 2 Fe(II)-[cytochrome b5] + O2 + 2 H(+) = 7-dehydrodesmosterol + 2 Fe(III)-[cytochrome b5] + 2 H2O. Its pathway is steroid biosynthesis; cholesterol biosynthesis. In terms of biological role, catalyzes the penultimate step of the biosynthesis of cholesterol, the dehydrogenation of lathosterol into 7-dehydrocholesterol (7-DHC). Cholesterol is the major sterol component in mammalian membranes and a precursor for bile acid and steroid hormone synthesis. In addition to its essential role in cholesterol biosynthesis, it also indirectly regulates ferroptosis through the production of 7-DHC. By diverting the spread of damage caused by peroxyl radicals from the phospholipid components to its sterol nucleus, 7-DHC prevents this form of cell death. In Homo sapiens (Human), this protein is Lathosterol oxidase.